We begin with the raw amino-acid sequence, 128 residues long: LIM domain-containing protein 2 (128 aa).

N-acetylmethionine is present on Met1. A disordered region spans residues 1-25; sequence MFQAAGAAQATPSHEAKGSSGNSTV. Positions 39–99 constitute an LIM zinc-binding domain; it reads ETCAACQKTV…KPHFQQLFKS (61 aa). Zn(2+) contacts are provided by Cys41, Cys44, His62, Cys65, Cys68, Cys71, Cys89, and His92.

Interacts with ILK.

It localises to the cytoplasm. The protein localises to the nucleus. Its function is as follows. Acts as an activator of the protein-kinase ILK, thereby regulating cell motility. The chain is LIM domain-containing protein 2 (Limd2) from Rattus norvegicus (Rat).